Consider the following 302-residue polypeptide: Recombination-associated protein RdgC (302 aa).

The protein belongs to the RdgC family.

Its subcellular location is the cytoplasm. It localises to the nucleoid. In terms of biological role, may be involved in recombination. This Xylella fastidiosa (strain 9a5c) protein is Recombination-associated protein RdgC.